A 509-amino-acid chain; its full sequence is uncharacterized protein (509 aa).

Helical transmembrane passes span 14–34 (SAFTILFAILILAVGLTWVIP), 117–137 (TIEAVDVMVFIFVLGGMIGVI), 158–178 (EFFIVFCVSVLMVLGGTTCGI), 188–208 (ILVPVFLALGYDAIVCVGAIF), 209–229 (LAASMGTAFSTINPFSVVIAS), 240–260 (IGFRALGLVLGATCVIAYLYW), 303–323 (LILTLFCISFPIMIWGVMVGG), 324–344 (WWFPQMAASFLAITIIIMFIS), 359–379 (ASELVGVSLIIGLARGVNLVL), 399–419 (MPGSVFILGQLVVFIFLGLIV), 423–443 (SGLAVLSMPIMAPLADSVGIP), 458–478 (MLFLAPTGLVLVTLQMLQIPF), and 484–504 (FVMPMIGCLLLIGSILLVVQV).

To E.coli YfcC. The protein to B.subtilis YcgA.

It localises to the cell membrane. This is an uncharacterized protein from Haemophilus influenzae (strain ATCC 51907 / DSM 11121 / KW20 / Rd).